The following is a 240-amino-acid chain: UDP-2,3-diacylglucosamine hydrolase (240 aa).

Asp-8, His-10, Asp-41, Asn-79, and His-114 together coordinate Mn(2+). 79-80 (NR) serves as a coordination point for substrate. Residues Asp-122, Ser-160, Asn-164, Lys-167, and His-195 each coordinate substrate. The Mn(2+) site is built by His-195 and His-197.

It belongs to the LpxH family. It depends on Mn(2+) as a cofactor.

The protein resides in the cell inner membrane. The enzyme catalyses UDP-2-N,3-O-bis[(3R)-3-hydroxytetradecanoyl]-alpha-D-glucosamine + H2O = 2-N,3-O-bis[(3R)-3-hydroxytetradecanoyl]-alpha-D-glucosaminyl 1-phosphate + UMP + 2 H(+). Its pathway is glycolipid biosynthesis; lipid IV(A) biosynthesis; lipid IV(A) from (3R)-3-hydroxytetradecanoyl-[acyl-carrier-protein] and UDP-N-acetyl-alpha-D-glucosamine: step 4/6. Its function is as follows. Hydrolyzes the pyrophosphate bond of UDP-2,3-diacylglucosamine to yield 2,3-diacylglucosamine 1-phosphate (lipid X) and UMP by catalyzing the attack of water at the alpha-P atom. Involved in the biosynthesis of lipid A, a phosphorylated glycolipid that anchors the lipopolysaccharide to the outer membrane of the cell. This Serratia proteamaculans (strain 568) protein is UDP-2,3-diacylglucosamine hydrolase.